The sequence spans 162 residues: MTIPFRVGQGFDVHALVTGRPLIIGGVRIEHSHGLLGHSDADVLLHAVTDAILGAAGLGDIGRHFPDTDPRFKGADSRVLLREAMARVDAAGWQVVNVDATVHAQAPKIGPHAPAMVANIAADLGIAHDLVNIKAKTNEGLGYLGRKEGIAATVVTLLARQA.

A divalent metal cation contacts are provided by D12 and H14. Residues 12–14 (DVH) and 38–39 (HS) contribute to the 4-CDP-2-C-methyl-D-erythritol 2-phosphate site. H46 provides a ligand contact to a divalent metal cation. Residues 60–62 (DIG), 65–69 (FPDTD), and R146 contribute to the 4-CDP-2-C-methyl-D-erythritol 2-phosphate site.

Belongs to the IspF family. Homotrimer. The cofactor is a divalent metal cation.

The enzyme catalyses 4-CDP-2-C-methyl-D-erythritol 2-phosphate = 2-C-methyl-D-erythritol 2,4-cyclic diphosphate + CMP. The protein operates within isoprenoid biosynthesis; isopentenyl diphosphate biosynthesis via DXP pathway; isopentenyl diphosphate from 1-deoxy-D-xylulose 5-phosphate: step 4/6. Involved in the biosynthesis of isopentenyl diphosphate (IPP) and dimethylallyl diphosphate (DMAPP), two major building blocks of isoprenoid compounds. Catalyzes the conversion of 4-diphosphocytidyl-2-C-methyl-D-erythritol 2-phosphate (CDP-ME2P) to 2-C-methyl-D-erythritol 2,4-cyclodiphosphate (ME-CPP) with a corresponding release of cytidine 5-monophosphate (CMP). This Bordetella avium (strain 197N) protein is 2-C-methyl-D-erythritol 2,4-cyclodiphosphate synthase.